The chain runs to 123 residues: UPF0231 protein PMI2039 (123 aa).

The protein belongs to the UPF0231 family.

This chain is UPF0231 protein PMI2039, found in Proteus mirabilis (strain HI4320).